The chain runs to 622 residues: Phosphoribomutase (622 aa).

Residues threonine 57, arginine 61, 158 to 159 (SH), and lysine 168 each bind substrate. Serine 158 acts as the Phosphoserine intermediate in catalysis. Serine 158 is a binding site for Mg(2+). Serine 158 is modified (phosphoserine). 3 residues coordinate Mg(2+): aspartate 325, aspartate 327, and aspartate 329. Substrate contacts are provided by residues 329 to 330 (DR), threonine 404, 428 to 430 (EEA), and lysine 442.

The protein belongs to the phosphohexose mutase family. Requires Mg(2+) as cofactor.

It localises to the cytoplasm. The protein localises to the nucleus. The enzyme catalyses alpha-D-ribose 1-phosphate = D-ribose 5-phosphate. Functionally, major phosphoribomutase that converts ribose 1-phosphate to ribose 5-phosphate. Involved in ribose salvage via the pentose phosphate pathway. The protein is Phosphoribomutase of Saccharomyces cerevisiae (strain ATCC 204508 / S288c) (Baker's yeast).